We begin with the raw amino-acid sequence, 642 residues long: Threonine--tRNA ligase (642 aa).

The TGS domain occupies 1 to 61; sequence MPIITLPDGS…EADASLAIIT (61 aa). The tract at residues 243–534 is catalytic; that stretch reads DHRKIGKQLD…LTEEYAGLFP (292 aa). Zn(2+)-binding residues include Cys334, His385, and His511.

This sequence belongs to the class-II aminoacyl-tRNA synthetase family. In terms of assembly, homodimer. The cofactor is Zn(2+).

The protein resides in the cytoplasm. The catalysed reaction is tRNA(Thr) + L-threonine + ATP = L-threonyl-tRNA(Thr) + AMP + diphosphate + H(+). Catalyzes the attachment of threonine to tRNA(Thr) in a two-step reaction: L-threonine is first activated by ATP to form Thr-AMP and then transferred to the acceptor end of tRNA(Thr). Also edits incorrectly charged L-seryl-tRNA(Thr). This Aeromonas hydrophila subsp. hydrophila (strain ATCC 7966 / DSM 30187 / BCRC 13018 / CCUG 14551 / JCM 1027 / KCTC 2358 / NCIMB 9240 / NCTC 8049) protein is Threonine--tRNA ligase.